We begin with the raw amino-acid sequence, 306 residues long: Isoaspartyl peptidase/L-asparaginase (306 aa).

The active-site Nucleophile is T174. Substrate is bound by residues 202–205 (RIGD) and 224–227 (TGKG).

Belongs to the Ntn-hydrolase family. As to quaternary structure, heterotetramer of two alpha and two beta chains arranged as a dimer of alpha/beta heterodimers. Cleaved into an alpha and beta chain by autocatalysis; this activates the enzyme. The N-terminal residue of the beta subunit is responsible for the nucleophile hydrolase activity. In terms of tissue distribution, developing seeds.

It catalyses the reaction Cleavage of a beta-linked Asp residue from the N-terminus of a polypeptide.. Degrades proteins damaged by L-isoaspartyl residue formation (also known as beta-Asp residues). Also has L-asparaginase activity, which is used to liberate stored nitrogen during seed development. The sequence is that of Isoaspartyl peptidase/L-asparaginase from Lupinus arboreus (Tree lupine).